We begin with the raw amino-acid sequence, 261 residues long: Triosephosphate isomerase (261 aa).

Position 10–12 (Asn-10–Lys-12) interacts with substrate. Catalysis depends on His-100, which acts as the Electrophile. The Proton acceptor role is filled by Glu-172. Substrate is bound by residues Gly-178, Ser-218, and Gly-239–Gly-240.

The protein belongs to the triosephosphate isomerase family. As to quaternary structure, homodimer.

It is found in the cytoplasm. It carries out the reaction D-glyceraldehyde 3-phosphate = dihydroxyacetone phosphate. It participates in carbohydrate biosynthesis; gluconeogenesis. The protein operates within carbohydrate degradation; glycolysis; D-glyceraldehyde 3-phosphate from glycerone phosphate: step 1/1. In terms of biological role, involved in the gluconeogenesis. Catalyzes stereospecifically the conversion of dihydroxyacetone phosphate (DHAP) to D-glyceraldehyde-3-phosphate (G3P). The polypeptide is Triosephosphate isomerase (Saccharopolyspora erythraea (strain ATCC 11635 / DSM 40517 / JCM 4748 / NBRC 13426 / NCIMB 8594 / NRRL 2338)).